A 559-amino-acid chain; its full sequence is TBC1 domain family member 24 (559 aa).

A 1,2-diacyl-sn-glycero-3-phospho-(1D-myo-inositol) contacts are provided by residues lysine 36, arginine 40, lysine 238, arginine 242, and arginine 293 to arginine 297. The region spanning serine 47–serine 262 is the Rab-GAP TBC domain. Residues glutamate 343–glutamine 554 form the TLDc domain. 2 positions are modified to phosphoserine: serine 473 and serine 480.

In terms of assembly, interacts with ARF6. As to expression, highest expression in brain.

Its subcellular location is the cell membrane. The protein resides in the cytoplasm. The protein localises to the cytoplasmic vesicle membrane. It is found in the presynapse. Functionally, may act as a GTPase-activating protein for Rab family protein(s). Involved in neuronal projections development, probably through a negative modulation of ARF6 function. Involved in the regulation of synaptic vesicle trafficking. This chain is TBC1 domain family member 24 (TBC1D24), found in Homo sapiens (Human).